The primary structure comprises 288 residues: Putative N-terminal acetyltransferase 2 (288 aa).

The interval 68 to 90 is disordered; it reads TEEKSSQFDENKSKSNNGKKNEP.

Heterooligomeric.

The protein localises to the cytoplasm. Its function is as follows. Maybe involved in N-terminal acetylation of proteins. N-acetylation plays a role in normal eukaryotic translation and processing, protect against proteolytic degradation and protein turnover. The chain is Putative N-terminal acetyltransferase 2 (NAT2) from Saccharomyces cerevisiae (strain ATCC 204508 / S288c) (Baker's yeast).